A 199-amino-acid chain; its full sequence is Glycerol-3-phosphate acyltransferase (199 aa).

A run of 5 helical transmembrane segments spans residues 3 to 23 (IKILYIIITYLCGSIPSAYIV), 55 to 75 (VITLIADILKGFIPVYFATFI), 79 to 99 (FSYSVAVAAAAMVGHVFTIFL), 113 to 133 (VFFALMRWPSLIALAIFGLAF), and 155 to 175 (YFLGYSTEVVIFTFAITLLII).

It belongs to the PlsY family. As to quaternary structure, probably interacts with PlsX.

It localises to the cell inner membrane. The enzyme catalyses an acyl phosphate + sn-glycerol 3-phosphate = a 1-acyl-sn-glycero-3-phosphate + phosphate. Its pathway is lipid metabolism; phospholipid metabolism. Functionally, catalyzes the transfer of an acyl group from acyl-phosphate (acyl-PO(4)) to glycerol-3-phosphate (G3P) to form lysophosphatidic acid (LPA). This enzyme utilizes acyl-phosphate as fatty acyl donor, but not acyl-CoA or acyl-ACP. This is Glycerol-3-phosphate acyltransferase from Endomicrobium trichonymphae.